Reading from the N-terminus, the 134-residue chain is Phosphoribosyl-AMP cyclohydrolase (134 aa).

Aspartate 77 provides a ligand contact to Mg(2+). Cysteine 78 provides a ligand contact to Zn(2+). Positions 79 and 81 each coordinate Mg(2+). Zn(2+) contacts are provided by cysteine 95 and cysteine 102.

The protein belongs to the PRA-CH family. As to quaternary structure, homodimer. The cofactor is Mg(2+). Requires Zn(2+) as cofactor.

The protein localises to the cytoplasm. The catalysed reaction is 1-(5-phospho-beta-D-ribosyl)-5'-AMP + H2O = 1-(5-phospho-beta-D-ribosyl)-5-[(5-phospho-beta-D-ribosylamino)methylideneamino]imidazole-4-carboxamide. It participates in amino-acid biosynthesis; L-histidine biosynthesis; L-histidine from 5-phospho-alpha-D-ribose 1-diphosphate: step 3/9. In terms of biological role, catalyzes the hydrolysis of the adenine ring of phosphoribosyl-AMP. The chain is Phosphoribosyl-AMP cyclohydrolase from Pseudomonas aeruginosa (strain UCBPP-PA14).